Consider the following 430-residue polypeptide: Enolase (430 aa).

Residue Q167 coordinates (2R)-2-phosphoglycerate. E209 (proton donor) is an active-site residue. D246, E287, and D314 together coordinate Mg(2+). (2R)-2-phosphoglycerate-binding residues include K339, R368, S369, and K390. Residue K339 is the Proton acceptor of the active site.

The protein belongs to the enolase family. It depends on Mg(2+) as a cofactor.

The protein localises to the cytoplasm. Its subcellular location is the secreted. It localises to the cell surface. The enzyme catalyses (2R)-2-phosphoglycerate = phosphoenolpyruvate + H2O. The protein operates within carbohydrate degradation; glycolysis; pyruvate from D-glyceraldehyde 3-phosphate: step 4/5. Its function is as follows. Catalyzes the reversible conversion of 2-phosphoglycerate (2-PG) into phosphoenolpyruvate (PEP). It is essential for the degradation of carbohydrates via glycolysis. In Prochlorococcus marinus (strain MIT 9215), this protein is Enolase.